The following is a 60-amino-acid chain: Large ribosomal subunit protein bL32 (60 aa).

Positions 1-22 (MAVPKKKTSKSRRDMRRSHHAL) are enriched in basic residues. The tract at residues 1–27 (MAVPKKKTSKSRRDMRRSHHALKGSAY) is disordered.

The protein belongs to the bacterial ribosomal protein bL32 family.

The chain is Large ribosomal subunit protein bL32 from Rhodospirillum centenum (strain ATCC 51521 / SW).